Consider the following 813-residue polypeptide: Fibroblast growth factor receptor 2 (813 aa).

Residues 1–14 (MLLLALLAFLLVSR) form the signal peptide. The Extracellular portion of the chain corresponds to 18–367 (RPSYSMVDDT…EDNPVPYYME (350 aa)). The region spanning 21 to 117 (YSMVDDTTPE…NSHFFHVNVT (97 aa)) is the Ig-like C2-type 1 domain. A disulfide bridge connects residues Cys-58 and Cys-103. Asn-79 and Asn-115 each carry an N-linked (GlcNAc...) asparagine glycan. The tract at residues 119 to 143 (ASSSGDDEDDNDGSEDFTNDNNNIR) is disordered. The span at 123-136 (GDDEDDNDGSEDFT) shows a compositional bias: acidic residues. Ig-like C2-type domains follow at residues 145–237 (PYWT…YHLD) and 246–348 (PILQ…AWLT). The tract at residues 152 to 169 (KMEKKLHAVSAANTVKLR) is heparin-binding. Cys-170 and Cys-221 are joined by a disulfide. N-linked (GlcNAc...) asparagine glycans are attached at residues Asn-231, Asn-255, Asn-287, Asn-308, and Asn-321. The cysteines at positions 268 and 332 are disulfide-linked. A helical transmembrane segment spans residues 368–388 (IGIYSTGIFIIFCMVVVCVVC). The Cytoplasmic segment spans residues 389–813 (RMRQGAKKKK…FQHVNGVVKT (425 aa)). Tyr-456 bears the Phosphotyrosine; by autocatalysis mark. A Protein kinase domain is found at 471-760 (LTLGKPLGEG…LTLTTNEEYL (290 aa)). ATP is bound by residues 477 to 485 (LGEGCFGQV), Lys-507, 555 to 557 (EYA), and Asn-561. Position 576 is a phosphotyrosine; by autocatalysis (Tyr-576). Asp-616 functions as the Proton acceptor in the catalytic mechanism. Residues Tyr-646, Tyr-647, and Tyr-759 each carry the phosphotyrosine; by autocatalysis modification. Residues 771-792 (PSFPDSSCSASSSSGDDSVFSP) show a composition bias toward low complexity. Residues 771–801 (PSFPDSSCSASSSSGDDSVFSPDPMPHDPCL) form a disordered region.

This sequence belongs to the protein kinase superfamily. Tyr protein kinase family. Fibroblast growth factor receptor subfamily. As to quaternary structure, monomer. Homodimer after ligand binding. Post-translationally, autophosphorylated. Binding of FGF family members together with heparan sulfate proteoglycan or heparin promotes receptor dimerization and autophosphorylation on tyrosine residues. Autophosphorylation occurs in trans between the two FGFR molecules present in the dimer. N-glycosylated in the endoplasmic reticulum. The N-glycan chains undergo further maturation to an Endo H-resistant form in the Golgi apparatus. In terms of processing, ubiquitinated. FGFR2 is rapidly ubiquitinated after autophosphorylation, leading to internalization and degradation. Subject to degradation both in lysosomes and by the proteasome. In terms of tissue distribution, expressed in the anterior neural plate in early neurula stage embryos. Later in development, the protein is also expressed in the eye anlagen, midbrain-hindbrain boundary and otic vesicle.

It is found in the cell membrane. It localises to the golgi apparatus. The protein localises to the cytoplasmic vesicle. It catalyses the reaction L-tyrosyl-[protein] + ATP = O-phospho-L-tyrosyl-[protein] + ADP + H(+). Present in an inactive conformation in the absence of bound ligand. Ligand binding leads to dimerization and activation by autophosphorylation on tyrosine residues. Its function is as follows. Tyrosine-protein kinase that acts as a cell-surface receptor for fibroblast growth factors and plays an essential role in the regulation of cell proliferation, differentiation, migration and apoptosis, and in the regulation of embryonic development. Required for normal embryonic patterning, limb bud development, lung morphogenesis, osteogenesis and skin development. Plays an essential role in the regulation of osteoblast differentiation, proliferation and apoptosis, and is required for normal skeleton development. Promotes cell proliferation in keratinocytes and immature osteoblasts, but promotes apoptosis in differentiated osteoblasts. Phosphorylates PLCG1, FRS2 and PAK4. Ligand binding leads to the activation of several signaling cascades. Activation of PLCG1 leads to the production of the cellular signaling molecules diacylglycerol and inositol 1,4,5-trisphosphate. Phosphorylation of FRS2 triggers recruitment of GRB2, GAB1, PIK3R1 and SOS1, and mediates activation of RAS, MAPK1/ERK2, MAPK3/ERK1 and the MAP kinase signaling pathway, as well as of the AKT1 signaling pathway. FGFR2 signaling is down-regulated by ubiquitination, internalization and degradation. Mutations that lead to constitutive kinase activation or impair normal FGFR2 maturation, internalization and degradation lead to aberrant signaling. Over-expressed FGFR2 promotes activation of STAT1. This is Fibroblast growth factor receptor 2 (fgfr2) from Xenopus laevis (African clawed frog).